The chain runs to 201 residues: Dephospho-CoA kinase (201 aa).

A DPCK domain is found at 4–201; the sequence is SVGLTGNIAS…KYLREAKIKQ (198 aa). 12 to 17 provides a ligand contact to ATP; sequence ASGKST.

It belongs to the CoaE family.

The protein localises to the cytoplasm. It catalyses the reaction 3'-dephospho-CoA + ATP = ADP + CoA + H(+). It functions in the pathway cofactor biosynthesis; coenzyme A biosynthesis; CoA from (R)-pantothenate: step 5/5. Its function is as follows. Catalyzes the phosphorylation of the 3'-hydroxyl group of dephosphocoenzyme A to form coenzyme A. In Legionella pneumophila (strain Lens), this protein is Dephospho-CoA kinase.